A 122-amino-acid chain; its full sequence is Seripauperin-5 (122 aa).

A helical membrane pass occupies residues 7-24 (IAAGVAAIAAGASAAATT).

This sequence belongs to the SRP1/TIP1 family. Seripauperin subfamily.

It is found in the membrane. The polypeptide is Seripauperin-5 (PAU5) (Saccharomyces cerevisiae (strain ATCC 204508 / S288c) (Baker's yeast)).